The primary structure comprises 499 residues: NADH-quinone oxidoreductase subunit 14 (499 aa).

14 helical membrane passes run 9 to 29 (ILPE…GAYL), 37 to 57 (TLLW…GLGN), 76 to 96 (FAKV…ADYM), 104 to 124 (FEFP…VSAG), 126 to 146 (LLTL…VAAM), 161 to 181 (FVLG…VYGF), 196 to 216 (AGHL…GLSF), 235 to 255 (PTPV…ALIA), 269 to 289 (WSQI…IAGI), 301 to 321 (SSIA…AIGV), 324 to 344 (MLLY…FILS), 369 to 389 (ALAM…LGFF), 402 to 422 (GMGW…FYYL), and 446 to 466 (YLAL…MFGV).

Belongs to the complex I subunit 2 family. As to quaternary structure, NDH-1 is composed of at least 14 different subunits, Nqo1 to Nqo14. The complex has a L-shaped structure, with the hydrophobic arm (subunits Nqo7, Nqo8, Nqo10 to Nqo14) embedded in the inner membrane and the hydrophilic peripheral arm (subunits Nqo1 to Nqo6, Nqo9) protruding into the bacterial cytoplasm. The hydrophilic domain contains all the redox centers.

The protein resides in the cell inner membrane. It carries out the reaction a quinone + NADH + 5 H(+)(in) = a quinol + NAD(+) + 4 H(+)(out). Its function is as follows. NDH-1 shuttles electrons from NADH, via FMN and iron-sulfur (Fe-S) centers, to quinones in the respiratory chain. The immediate electron acceptor for the enzyme in this species is believed to be ubiquinone. Couples the redox reaction to proton translocation (for every two electrons transferred, four hydrogen ions are translocated across the cytoplasmic membrane), and thus conserves the redox energy in a proton gradient. This Paracoccus denitrificans protein is NADH-quinone oxidoreductase subunit 14.